Reading from the N-terminus, the 219-residue chain is GTP cyclohydrolase 1 (219 aa).

Positions 1–37 are disordered; the sequence is MDAVLKSLSVRLPDAADKRSDTGRPERVTERPTRQEA. Positions 14 to 37 are enriched in basic and acidic residues; sequence DAADKRSDTGRPERVTERPTRQEA. Residues cysteine 108, histidine 111, and cysteine 179 each coordinate Zn(2+).

This sequence belongs to the GTP cyclohydrolase I family. Homomer.

It carries out the reaction GTP + H2O = 7,8-dihydroneopterin 3'-triphosphate + formate + H(+). It functions in the pathway cofactor biosynthesis; 7,8-dihydroneopterin triphosphate biosynthesis; 7,8-dihydroneopterin triphosphate from GTP: step 1/1. The polypeptide is GTP cyclohydrolase 1 (Methylobacterium sp. (strain 4-46)).